The primary structure comprises 781 residues: Death domain-containing protein 1 (781 aa).

ZU5 domains lie at 167-301 (IMEK…VSCL) and 302-483 (KKES…VLHL). Residues 679–764 (DNLLHWLAEE…DLAEELKFKW (86 aa)) enclose the Death domain.

This Homo sapiens (Human) protein is Death domain-containing protein 1 (DTHD1).